The chain runs to 20 residues: Large ribosomal subunit protein bL31 (20 aa).

Residues residue 16 and residue 18 each contribute to the Zn(2+) site.

Belongs to the bacterial ribosomal protein bL31 family. Type A subfamily. As to quaternary structure, part of the 50S ribosomal subunit. The cofactor is Zn(2+).

In terms of biological role, binds the 23S rRNA. In Ectopseudomonas mendocina (Pseudomonas mendocina), this protein is Large ribosomal subunit protein bL31 (rpmE).